Here is a 207-residue protein sequence, read N- to C-terminus: Superoxide dismutase [Fe] (207 aa).

4 residues coordinate Fe cation: histidine 28, histidine 76, aspartate 160, and histidine 164.

The protein belongs to the iron/manganese superoxide dismutase family. As to quaternary structure, homotetramer. It depends on Fe cation as a cofactor.

It localises to the secreted. It catalyses the reaction 2 superoxide + 2 H(+) = H2O2 + O2. Functionally, destroys superoxide anion radicals which are normally produced within the cells and which are toxic to biological systems. This is Superoxide dismutase [Fe] (sodB) from Mycobacterium tuberculosis (strain CDC 1551 / Oshkosh).